The following is a 685-amino-acid chain: Methionine--tRNA ligase (685 aa).

A 'HIGH' region motif is present at residues 12–22 (PYANGSIHLGH). Cys-143, Cys-146, Cys-156, and Cys-159 together coordinate Zn(2+). Positions 339-343 (KMSKS) match the 'KMSKS' region motif. Lys-342 is an ATP binding site. One can recognise a tRNA-binding domain in the interval 582 to 685 (DFMKIDMRVA…AGAQPGDKVG (104 aa)).

It belongs to the class-I aminoacyl-tRNA synthetase family. MetG type 1 subfamily. As to quaternary structure, homodimer. Zn(2+) serves as cofactor.

The protein localises to the cytoplasm. The catalysed reaction is tRNA(Met) + L-methionine + ATP = L-methionyl-tRNA(Met) + AMP + diphosphate. Its function is as follows. Is required not only for elongation of protein synthesis but also for the initiation of all mRNA translation through initiator tRNA(fMet) aminoacylation. This Neisseria meningitidis serogroup A / serotype 4A (strain DSM 15465 / Z2491) protein is Methionine--tRNA ligase.